The following is a 915-amino-acid chain: Protein ZDS1 (915 aa).

Disordered stretches follow at residues 1-28, 69-134, 179-261, 310-330, 412-433, and 464-807; these read MSNRDNESMLRTTSSDKAIASQRDKRKS, GESS…KKGV, LSDN…SETV, GSYSDKKDQPQPEGHYDEGDI, KSPFRQQDEDSENMSSPGSIGD, and KVRN…SILP. A compositionally biased stretch (low complexity) spans 74–93; it reads RRSWSGTTSSSASMPSDTTT. Residues 115–125 are compositionally biased toward polar residues; it reads GIESSNKTKQG. Basic and acidic residues predominate over residues 202 to 212; it reads DKESQSYENKE. Residue Ser-229 is modified to Phosphoserine. The segment covering 243–252 has biased composition (acidic residues); the sequence is EFDDNEDDDN. Basic and acidic residues predominate over residues 313-327; sequence SDKKDQPQPEGHYDE. The span at 464 to 480 shows a compositional bias: basic and acidic residues; sequence KVRNDTVEQDLELREGT. Residues 515–530 show a composition bias toward acidic residues; that stretch reads DDNEENQGDDENEENV. Composition is skewed to basic and acidic residues over residues 531-541 and 552-562; these read DSQRMELDNSK and EKTEVSNKEEM. 2 stretches are compositionally biased toward low complexity: residues 565–574 and 597–609; these read SSTSTATSQT and SSSPSSSPSSSPS. Composition is skewed to basic residues over residues 618 to 627 and 642 to 656; these read VRVRKSKKLG and NRPRPHRHHHSRHGS. Over residues 668–679 the composition is skewed to low complexity; the sequence is QPQQQIPLQPQL. The span at 696 to 710 shows a compositional bias: polar residues; it reads LPQLQPAVSVSSTKS. Composition is skewed to basic and acidic residues over residues 711–721 and 742–751; these read NSRDREEEEAK and VQKENTDEQK. Positions 752-793 are enriched in polar residues; sequence AQLQAPAQEQVQTSVPVQASAPVQNSAPVQTSAPVEASAQTQ.

It to yeast ZDS2/MCS1. As to quaternary structure, interacts with BCY1, DBP5, GFD1 and SKG6.

The protein resides in the cytoplasm. Its function is as follows. Has a role in establishing cell polarity. Together with cAMP-dependent protein kinase regulatory subunit BCY1, provides a negative feedback control on the cell wall integrity-signaling pathway by acting as a negative regulator of MAP kinase SLT2/MPK1. In heat-stressed cells appears to play a role in localizing BCY1 to the cytoplasm. Seems to interact with, and down-regulate, CDC42. Also acts as a suppressor of PKC1. May act as an integration point for distinct signaling pathways helping to maintain a balance among these different pathways. When associated with DBP5, GFD1 and nucleoporins at the cytosolic fibrils of the nuclear pore complex, is required for mRNA export form the nucleus. This Saccharomyces cerevisiae (strain ATCC 204508 / S288c) (Baker's yeast) protein is Protein ZDS1 (ZDS1).